The chain runs to 683 residues: DNA ligase 2 (683 aa).

NAD(+)-binding positions include 27 to 31, 76 to 77, and E106; these read DGEFD and SL. Residue K108 is the N6-AMP-lysine intermediate of the active site. NAD(+) is bound by residues R129, E169, K285, and K309. Positions 403, 406, 422, and 428 each coordinate Zn(2+). Positions 592–681 constitute a BRCT domain; the sequence is SIERTLEGLS…PAAVAAEEPE (90 aa).

This sequence belongs to the NAD-dependent DNA ligase family. LigA subfamily. Requires Mg(2+) as cofactor. Mn(2+) serves as cofactor.

It carries out the reaction NAD(+) + (deoxyribonucleotide)n-3'-hydroxyl + 5'-phospho-(deoxyribonucleotide)m = (deoxyribonucleotide)n+m + AMP + beta-nicotinamide D-nucleotide.. Functionally, DNA ligase that catalyzes the formation of phosphodiester linkages between 5'-phosphoryl and 3'-hydroxyl groups in double-stranded DNA using NAD as a coenzyme and as the energy source for the reaction. It is essential for DNA replication and repair of damaged DNA. The chain is DNA ligase 2 from Nocardia farcinica (strain IFM 10152).